The sequence spans 243 residues: Fibroblast growth factor 12 (243 aa).

Disordered stretches follow at residues 1–39 (MAAA…DGRS) and 216–243 (IGEK…QDST). The Bipartite nuclear localization signal signature appears at 11–38 (RQKRQARESNSDRVSASKRRSSPSKDGR).

This sequence belongs to the heparin-binding growth factors family. Interacts with the C-terminal region of SCN9A. As to expression, brain, eye and testis; highly expressed in embryonic retina, olfactory epithelium, olfactory bulb, and in a segmental pattern of the body wall; in adult olfactory bulb, less in cerebellum, deep cerebellar nuclei, cortex and multiple midbrain structures.

It localises to the nucleus. Its function is as follows. Involved in nervous system development and function. Involved in the positive regulation of voltage-gated sodium channel activity. Promotes neuronal excitability by elevating the voltage dependence of neuronal sodium channel SCN8A fast inactivation. The sequence is that of Fibroblast growth factor 12 (FGF12) from Homo sapiens (Human).